A 669-amino-acid polypeptide reads, in one-letter code: GTP-binding protein 1 (669 aa).

The tract at residues 1–32 (MATERSRSAMDSPVPASMFAPEPSSPGAARAA) is disordered. Phosphoserine is present on residues Ser-6, Ser-8, Ser-12, Ser-24, Ser-25, Ser-44, Ser-47, and Ser-69. The 232-residue stretch at 158 to 389 (FLEVRVAVVG…LNLLSPRTSY (232 aa)) folds into the tr-type G domain. A G1 region spans residues 167–174 (GNVDAGKS). A GTP-binding site is contributed by 167–174 (GNVDAGKS). The segment at 206–210 (GRTSS) is G2. Positions 252–255 (DLAG) are G3. GTP is bound by residues 252-256 (DLAGH) and 308-311 (TKID). Positions 308–311 (TKID) are G4. The G5 stretch occupies residues 366–368 (SNV). Positions 573-595 (LLQTTNNSPMNSKPQQIKMQSTK) are enriched in polar residues. Positions 573 to 669 (LLQTTNNSPM…GACVTPASGC (97 aa)) are disordered. Phosphoserine is present on Ser-580. Residues 646-657 (GRRRGGQRHKVK) show a composition bias toward basic residues.

It belongs to the TRAFAC class translation factor GTPase superfamily. Classic translation factor GTPase family. GTPBP1 subfamily. As to quaternary structure, interacts with EXOSC2/RRP4, EXOSC3/RRP40, EXOSC5/RRP46, HNRNPD, HNRNPR and SYNCRIP. Identified in a complex with AANAT mRNA, but does not bind mRNA by itself.

Its subcellular location is the cytoplasm. Functionally, promotes degradation of target mRNA species. Plays a role in the regulation of circadian mRNA stability. Binds GTP and has GTPase activity. This is GTP-binding protein 1 (GTPBP1) from Homo sapiens (Human).